The chain runs to 249 residues: Triosephosphate isomerase (249 aa).

Asn-8–Lys-10 contributes to the substrate binding site. His-95 functions as the Electrophile in the catalytic mechanism. Glu-166 serves as the catalytic Proton acceptor. Residues Gly-172, Ser-211, and Gly-232–Gly-233 each bind substrate.

It belongs to the triosephosphate isomerase family. As to quaternary structure, homodimer.

Its subcellular location is the cytoplasm. The enzyme catalyses D-glyceraldehyde 3-phosphate = dihydroxyacetone phosphate. It functions in the pathway carbohydrate biosynthesis; gluconeogenesis. It participates in carbohydrate degradation; glycolysis; D-glyceraldehyde 3-phosphate from glycerone phosphate: step 1/1. Its function is as follows. Involved in the gluconeogenesis. Catalyzes stereospecifically the conversion of dihydroxyacetone phosphate (DHAP) to D-glyceraldehyde-3-phosphate (G3P). This chain is Triosephosphate isomerase, found in Granulibacter bethesdensis (strain ATCC BAA-1260 / CGDNIH1).